The following is a 367-amino-acid chain: Glycerol dehydrogenase (367 aa).

NAD(+) contacts are provided by Asp-37, Gly-94, Lys-95, Thr-116, and Ser-119. Asp-121 provides a ligand contact to glycerol. NAD(+) is bound by residues Ser-125, Leu-127, and Tyr-131. Zn(2+) contacts are provided by Asp-171, His-254, and His-271. Residue His-254 coordinates glycerol.

It belongs to the iron-containing alcohol dehydrogenase family. The cofactor is Zn(2+).

It carries out the reaction glycerol + NAD(+) = dihydroxyacetone + NADH + H(+). Its pathway is polyol metabolism; glycerol fermentation; glycerone phosphate from glycerol (oxidative route): step 1/2. In terms of biological role, catalyzes the NAD-dependent oxidation of glycerol to dihydroxyacetone (glycerone). Allows microorganisms to utilize glycerol as a source of carbon under anaerobic conditions. This chain is Glycerol dehydrogenase (gldA), found in Escherichia coli O6:H1 (strain CFT073 / ATCC 700928 / UPEC).